Reading from the N-terminus, the 209-residue chain is Protein bli-3 (209 aa).

The segment covering 1-11 (MSGQGFSNADT) has biased composition (polar residues). The segment at 1–24 (MSGQGFSNADTGNKPADPYKQANL) is disordered.

This Neurospora crassa (strain ATCC 24698 / 74-OR23-1A / CBS 708.71 / DSM 1257 / FGSC 987) protein is Protein bli-3 (bli-3).